A 160-amino-acid polypeptide reads, in one-letter code: Crossover junction endodeoxyribonuclease RuvC (160 aa).

Residues D7, E67, and D138 contribute to the active site. Mg(2+)-binding residues include D7, E67, and D138.

The protein belongs to the RuvC family. In terms of assembly, homodimer which binds Holliday junction (HJ) DNA. The HJ becomes 2-fold symmetrical on binding to RuvC with unstacked arms; it has a different conformation from HJ DNA in complex with RuvA. In the full resolvosome a probable DNA-RuvA(4)-RuvB(12)-RuvC(2) complex forms which resolves the HJ. The cofactor is Mg(2+).

The protein resides in the cytoplasm. It catalyses the reaction Endonucleolytic cleavage at a junction such as a reciprocal single-stranded crossover between two homologous DNA duplexes (Holliday junction).. In terms of biological role, the RuvA-RuvB-RuvC complex processes Holliday junction (HJ) DNA during genetic recombination and DNA repair. Endonuclease that resolves HJ intermediates. Cleaves cruciform DNA by making single-stranded nicks across the HJ at symmetrical positions within the homologous arms, yielding a 5'-phosphate and a 3'-hydroxyl group; requires a central core of homology in the junction. The consensus cleavage sequence is 5'-(A/T)TT(C/G)-3'. Cleavage occurs on the 3'-side of the TT dinucleotide at the point of strand exchange. HJ branch migration catalyzed by RuvA-RuvB allows RuvC to scan DNA until it finds its consensus sequence, where it cleaves and resolves the cruciform DNA. This is Crossover junction endodeoxyribonuclease RuvC from Brachyspira hyodysenteriae (strain ATCC 49526 / WA1).